The following is a 367-amino-acid chain: Alanine racemase (367 aa).

Lys40 serves as the catalytic Proton acceptor; specific for D-alanine. Position 40 is an N6-(pyridoxal phosphate)lysine (Lys40). Arg136 contacts substrate. Catalysis depends on Tyr263, which acts as the Proton acceptor; specific for L-alanine. A substrate-binding site is contributed by Met310.

This sequence belongs to the alanine racemase family. Pyridoxal 5'-phosphate serves as cofactor.

The catalysed reaction is L-alanine = D-alanine. Its pathway is amino-acid biosynthesis; D-alanine biosynthesis; D-alanine from L-alanine: step 1/1. Its function is as follows. Catalyzes the interconversion of L-alanine and D-alanine. May also act on other amino acids. This chain is Alanine racemase (alr), found in Streptococcus pneumoniae (strain ATCC 700669 / Spain 23F-1).